The primary structure comprises 227 residues: Octanoyltransferase (227 aa).

A BPL/LPL catalytic domain is found at 35–210 (DKTPDEIWLV…TFLQLVGYSA (176 aa)). Substrate contacts are provided by residues 74–81 (RGGQVTYH), 141–143 (SLG), and 154–156 (GLA). The Acyl-thioester intermediate role is filled by Cys-172.

Belongs to the LipB family.

The protein localises to the cytoplasm. It catalyses the reaction octanoyl-[ACP] + L-lysyl-[protein] = N(6)-octanoyl-L-lysyl-[protein] + holo-[ACP] + H(+). Its pathway is protein modification; protein lipoylation via endogenous pathway; protein N(6)-(lipoyl)lysine from octanoyl-[acyl-carrier-protein]: step 1/2. Catalyzes the transfer of endogenously produced octanoic acid from octanoyl-acyl-carrier-protein onto the lipoyl domains of lipoate-dependent enzymes. Lipoyl-ACP can also act as a substrate although octanoyl-ACP is likely to be the physiological substrate. The polypeptide is Octanoyltransferase (Pectobacterium atrosepticum (strain SCRI 1043 / ATCC BAA-672) (Erwinia carotovora subsp. atroseptica)).